We begin with the raw amino-acid sequence, 595 residues long: Estrogen receptor (595 aa).

Residues 1 to 184 (MTMTLHTKAS…AMESAKETRY (184 aa)) form a modulating (transactivation AF-1); mediates interaction with MACROD1 region. O-linked (GlcNAc) serine glycosylation is present at serine 10. The required for interaction with NCOA1 stretch occupies residues 35–47 (LERPLGEVYVDSS). The interaction with DDX5; self-association stretch occupies residues 35-174 (LERPLGEVYV…LASTSDKGSM (140 aa)). A phosphoserine; by CDK2 mark is found at serine 104 and serine 106. Phosphoserine is present on serine 118. The interval 144–174 (AGPPAFYRPNSDNRRQGGRERLASTSDKGSM) is disordered. Residues 154-165 (SDNRRQGGRERL) show a composition bias toward basic and acidic residues. Serine 167 is modified (phosphoserine; by CK2). 2 consecutive NR C4-type zinc fingers follow at residues 185–205 (CAVC…CEGC) and 221–245 (CPAT…LRKC). Positions 185-250 (CAVCNDYASG…RLRKCYEVGM (66 aa)) form a DNA-binding region, nuclear receptor. Residues 185 to 310 (CAVCNDYASG…TKKNSPVLSL (126 aa)) are mediates interaction with DNTTIP2. The hinge stretch occupies residues 251–310 (MKGGIRKDRRGGRMLKHKRQRDDGEGRNEAVPPGDMRSANLWPSPLLIKHTKKNSPVLSL). Basic residues predominate over residues 257–269 (KDRRGGRMLKHKR). The interval 257-288 (KDRRGGRMLKHKRQRDDGEGRNEAVPPGDMRS) is disordered. Position 260 is an asymmetric dimethylarginine; by PRMT1 (arginine 260). Residues 262–595 (GRMLKHKRQR…GEAENFPTTI (334 aa)) are interaction with AKAP13. A self-association region spans residues 264–594 (MLKHKRQRDD…TGEAENFPTT (331 aa)). An NR LBD domain is found at 311-547 (TADQMISALL…DLLLEMLDAH (237 aa)). The segment at 311–594 (TADQMISALL…TGEAENFPTT (284 aa)) is transactivation AF-2. 2 residues coordinate 17beta-estradiol: glutamate 353 and arginine 394. A lipid anchor (S-palmitoyl cysteine) is attached at cysteine 447. 17beta-estradiol is bound at residue histidine 524. Tyrosine 537 is subject to Phosphotyrosine; by Tyr-kinases. Residues 551-575 (APTNLGGPPPEDMSQSQLATSGSTP) form a disordered region. Residues 563-575 (MSQSQLATSGSTP) show a composition bias toward polar residues.

The protein belongs to the nuclear hormone receptor family. NR3 subfamily. In terms of assembly, binds DNA as a homodimer. Can form a heterodimer with ESR2. Interacts with coactivator NCOA5. Interacts with PELP1, the interaction is enhanced by 17-beta-estradiol; the interaction increases ESR1 transcriptional activity. Interacts with NCOA7; the interaction is ligand-inducible. Interacts with AKAP13, CUEDC2, HEXIM1, KDM5A, MAP1S, SMARD1, and UBE1C. Interacts with MUC1; the interaction is stimulated by 7 beta-estradiol (E2) and enhances ESR1-mediated transcription. Interacts with DNTTIP2, and UIMC1. Interacts with KMT2D/MLL2. Interacts with ATAD2; the interaction is enhanced by estradiol. Interacts with KIF18A and LDB1. Interacts with RLIM (via its C-terminus). Interacts with MACROD1. Interacts with SH2D4A and PLCG. Interacts with SH2D4A; the interaction blocks binding to PLCG and inhibits estrogen-induced cell proliferation. Interacts with DYNLL1. Interacts with CCDC62; the interaction requires estradiol and appears to enhance the transcription of target genes. Interacts with NR2C1; the interaction prevents homodimerization of ESR1 and suppresses its transcriptional activity and cell growth. Interacts with DNAAF4. Interacts with PRMT2. Interacts with RBFOX2. Interacts with EP300; the interaction is estrogen-dependent and enhanced by CITED1. Interacts with CITED1; the interaction is estrogen-dependent. Interacts with FAM120B, FOXL2, PHB2 and SLC30A9. Interacts with coactivators NCOA3 and NCOA6. Interacts with STK3/MST2 only in the presence of SAV1 and vice-versa. Binds to CSNK1D. Interacts with NCOA2; NCOA2 can interact with ESR1 AF-1 and AF-2 domains simultaneously and mediate their transcriptional synergy. Interacts with DDX5. Interacts with NCOA1; the interaction seems to require a self-association of N-terminal and C-terminal regions. Interacts with ZNF366, DDX17, NFKB1, RELA, SP1 and SP3. Interacts with NRIP1. Interacts with GPER1; the interaction occurs in an estrogen-dependent manner. Interacts with CLOCK and the interaction is stimulated by estrogen. Interacts with TRIP4 (ufmylated); estrogen dependent. Interacts with LMTK3; the interaction phosphorylates ESR1 (in vitro) and protects it against proteasomal degradation. Interacts with CCAR2 (via N-terminus) in a ligand-independent manner. Interacts with ZFHX3. Interacts with SFR1 in a ligand-dependent and -independent manner. Interacts with DCAF13, LATS1 and DCAF1; regulates ESR1 ubiquitination and ubiquitin-mediated proteasomal degradation. Interacts (via DNA-binding domain) with POU4F2 (C-terminus); this interaction increases the estrogen receptor ESR1 transcriptional activity in a DNA- and ligand 17-beta-estradiol-independent manner. Interacts with ESRRB isoform 1. Interacts with UBE3A and WBP2. Interacts with GTF2B. Interacts with RBM39. In the absence of hormonal ligand, interacts with TACC1. Interacts with PI3KR1 or PI3KR2 and PTK2/FAK1. Interacts with SRC. Interacts with BAG1; the interaction is promoted in the absence of estradiol (17-beta-estradiol/E2). Interacts with and ubiquitinated by STUB1; the interaction is promoted in the absence of estradiol (17-beta-estradiol/E2). Interacts with NEDD8. In terms of processing, phosphorylated by cyclin A/CDK2 and CK1. Phosphorylation probably enhances transcriptional activity. Dephosphorylation at Ser-118 by PPP5C inhibits its transactivation activity. Phosphorylated by LMTK3 (in vitro). Ubiquitinated; regulated by LATS1 via DCAF1 it leads to ESR1 proteasomal degradation. Deubiquitinated by OTUB1. Ubiquitinated by STUB1/CHIP; in the CA1 hippocampal region following loss of endogenous circulating estradiol (17-beta-estradiol/E2). Ubiquitinated by UBR5, leading to its degradation: UBR5 specifically recognizes and binds ligand-bound ESR1 when it is not associated with coactivators (NCOAs). In presence of NCOAs, the UBR5-degron is not accessible, preventing its ubiquitination and degradation. Post-translationally, palmitoylated at Cys-447 by ZDHHC7 and ZDHHC21. Palmitoylation is required for plasma membrane targeting and for rapid intracellular signaling via ERK and AKT kinases and cAMP generation, but not for signaling mediated by the nuclear hormone receptor. In terms of processing, dimethylated by PRMT1 at Arg-260. The methylation may favor cytoplasmic localization. Demethylated by JMJD6 at Arg-260.

It is found in the nucleus. It localises to the cytoplasm. The protein localises to the golgi apparatus. The protein resides in the cell membrane. Functionally, nuclear hormone receptor. The steroid hormones and their receptors are involved in the regulation of eukaryotic gene expression and affect cellular proliferation and differentiation in target tissues. Ligand-dependent nuclear transactivation involves either direct homodimer binding to a palindromic estrogen response element (ERE) sequence or association with other DNA-binding transcription factors, such as AP-1/c-Jun, c-Fos, ATF-2, Sp1 and Sp3, to mediate ERE-independent signaling. Ligand binding induces a conformational change allowing subsequent or combinatorial association with multiprotein coactivator complexes through LXXLL motifs of their respective components. Mutual transrepression occurs between the estrogen receptor (ER) and NF-kappa-B in a cell-type specific manner. Decreases NF-kappa-B DNA-binding activity and inhibits NF-kappa-B-mediated transcription from the IL6 promoter and displace RELA/p65 and associated coregulators from the promoter. Recruited to the NF-kappa-B response element of the CCL2 and IL8 promoters and can displace CREBBP. Present with NF-kappa-B components RELA/p65 and NFKB1/p50 on ERE sequences. Can also act synergistically with NF-kappa-B to activate transcription involving respective recruitment adjacent response elements; the function involves CREBBP. Can activate the transcriptional activity of TFF1. Also mediates membrane-initiated estrogen signaling involving various kinase cascades. Essential for MTA1-mediated transcriptional regulation of BRCA1 and BCAS3. Maintains neuronal survival in response to ischemic reperfusion injury when in the presence of circulating estradiol (17-beta-estradiol/E2). The polypeptide is Estrogen receptor (ESR1) (Sus scrofa (Pig)).